A 249-amino-acid chain; its full sequence is Ribonuclease HII (249 aa).

An RNase H type-2 domain is found at 30-221 (GPVAGVDEVG…VRRLVMDGEP (192 aa)). A divalent metal cation-binding residues include Asp36, Glu37, and Asp130.

The protein belongs to the RNase HII family. Mn(2+) serves as cofactor. Mg(2+) is required as a cofactor.

Its subcellular location is the cytoplasm. The enzyme catalyses Endonucleolytic cleavage to 5'-phosphomonoester.. In terms of biological role, endonuclease that specifically degrades the RNA of RNA-DNA hybrids. This chain is Ribonuclease HII, found in Mycolicibacterium vanbaalenii (strain DSM 7251 / JCM 13017 / BCRC 16820 / KCTC 9966 / NRRL B-24157 / PYR-1) (Mycobacterium vanbaalenii).